Here is a 249-residue protein sequence, read N- to C-terminus: Ubiquinone biosynthesis O-methyltransferase (249 aa).

Residues 1-21 (MIPEVSNEASQPAAHRQENVD) are disordered. Residues R52, G72, D93, and M137 each contribute to the S-adenosyl-L-methionine site.

Belongs to the methyltransferase superfamily. UbiG/COQ3 family.

The enzyme catalyses a 3-demethylubiquinol + S-adenosyl-L-methionine = a ubiquinol + S-adenosyl-L-homocysteine + H(+). It catalyses the reaction a 3-(all-trans-polyprenyl)benzene-1,2-diol + S-adenosyl-L-methionine = a 2-methoxy-6-(all-trans-polyprenyl)phenol + S-adenosyl-L-homocysteine + H(+). The protein operates within cofactor biosynthesis; ubiquinone biosynthesis. In terms of biological role, O-methyltransferase that catalyzes the 2 O-methylation steps in the ubiquinone biosynthetic pathway. This is Ubiquinone biosynthesis O-methyltransferase from Sodalis glossinidius (strain morsitans).